Consider the following 91-residue polypeptide: Translation initiation factor IF-1 (91 aa).

An S1-like domain is found at 1–72; sequence MAKEELLEFE…DRGRINFRHK (72 aa). Positions 70 to 91 are disordered; sequence RHKAEGNAPPPGARRQQNFRRR.

Belongs to the IF-1 family. Component of the 30S ribosomal translation pre-initiation complex which assembles on the 30S ribosome in the order IF-2 and IF-3, IF-1 and N-formylmethionyl-tRNA(fMet); mRNA recruitment can occur at any time during PIC assembly.

Its subcellular location is the cytoplasm. Functionally, one of the essential components for the initiation of protein synthesis. Stabilizes the binding of IF-2 and IF-3 on the 30S subunit to which N-formylmethionyl-tRNA(fMet) subsequently binds. Helps modulate mRNA selection, yielding the 30S pre-initiation complex (PIC). Upon addition of the 50S ribosomal subunit IF-1, IF-2 and IF-3 are released leaving the mature 70S translation initiation complex. The chain is Translation initiation factor IF-1 from Azorhizobium caulinodans (strain ATCC 43989 / DSM 5975 / JCM 20966 / LMG 6465 / NBRC 14845 / NCIMB 13405 / ORS 571).